A 601-amino-acid chain; its full sequence is DNA ligase (601 aa).

ATP is bound at residue D258. Residue K260 is the N6-AMP-lysine intermediate of the active site. The ATP site is built by R265, R280, E310, F350, R427, and K433. A disordered region spans residues 568 to 601 (DKSPEDATTTDEILEMYNKQPKKKIESPPIDESV).

It belongs to the ATP-dependent DNA ligase family. It depends on Mg(2+) as a cofactor.

It catalyses the reaction ATP + (deoxyribonucleotide)n-3'-hydroxyl + 5'-phospho-(deoxyribonucleotide)m = (deoxyribonucleotide)n+m + AMP + diphosphate.. In terms of biological role, DNA ligase that seals nicks in double-stranded DNA during DNA replication, DNA recombination and DNA repair. The polypeptide is DNA ligase (Saccharolobus islandicus (strain L.S.2.15 / Lassen #1) (Sulfolobus islandicus)).